Here is a 634-residue protein sequence, read N- to C-terminus: tRNA uridine 5-carboxymethylaminomethyl modification enzyme MnmG (634 aa).

14–19 contributes to the FAD binding site; the sequence is GGGHAG. 279 to 293 is an NAD(+) binding site; it reads GPRYCPSIEDKVVRF.

Belongs to the MnmG family. In terms of assembly, homodimer. Heterotetramer of two MnmE and two MnmG subunits. Requires FAD as cofactor.

The protein localises to the cytoplasm. Functionally, NAD-binding protein involved in the addition of a carboxymethylaminomethyl (cmnm) group at the wobble position (U34) of certain tRNAs, forming tRNA-cmnm(5)s(2)U34. The chain is tRNA uridine 5-carboxymethylaminomethyl modification enzyme MnmG from Xanthomonas campestris pv. campestris (strain 8004).